Consider the following 330-residue polypeptide: Clavaminate synthase-like protein At3g21360 (330 aa).

Ala2 bears the N-acetylalanine mark. The Fe cation site is built by His120, Glu122, and His313.

Fe cation serves as cofactor.

This chain is Clavaminate synthase-like protein At3g21360, found in Arabidopsis thaliana (Mouse-ear cress).